A 360-amino-acid polypeptide reads, in one-letter code: Protein NDRG2 (360 aa).

The tract at residues 325–360 (RTASLSSEGNRSRSRTLSQSSESGGGPPAPLAEVTC) is disordered.

Belongs to the NDRG family.

Its subcellular location is the cytoplasm. Its function is as follows. Contributes to the regulation of the Wnt signaling pathway. Down-regulates CTNNB1-mediated transcriptional activation of target genes. May be involved in neuron differentiation. The chain is Protein NDRG2 from Xenopus tropicalis (Western clawed frog).